The primary structure comprises 162 residues: Lymphocyte antigen 86 (162 aa).

The first 20 residues, 1–20 (MKGFTATLFLWTLIFPSCSG), serve as a signal peptide directing secretion. 3 cysteine pairs are disulfide-bonded: Cys33/Cys58, Cys45/Cys154, and Cys102/Cys112. An N-linked (GlcNAc...) asparagine glycan is attached at Asn96. N-linked (GlcNAc...) asparagine glycosylation is present at Asn156.

As to quaternary structure, M-shaped tetramer of two CD180-LY86 heterodimers. As to expression, highly expressed in B-cells, monocytes and tonsil.

It is found in the secreted. The protein localises to the extracellular space. Its function is as follows. May cooperate with CD180 and TLR4 to mediate the innate immune response to bacterial lipopolysaccharide (LPS) and cytokine production. Important for efficient CD180 cell surface expression. This chain is Lymphocyte antigen 86 (LY86), found in Homo sapiens (Human).